The sequence spans 60 residues: Large ribosomal subunit protein bL33 (60 aa).

The protein belongs to the bacterial ribosomal protein bL33 family.

The protein is Large ribosomal subunit protein bL33 of Pelodictyon phaeoclathratiforme (strain DSM 5477 / BU-1).